The following is a 312-amino-acid chain: Peptide methionine sulfoxide reductase MsrA/MsrB 1 (312 aa).

Positions 1–155 are peptide methionine sulfoxide reductase; sequence MAEIYLAGGC…PSGYCHIDVT (155 aa). Residue Cys10 is part of the active site. A MsrB domain is found at 172 to 295; it reads QEVLKASLSE…NSASLRFVAK (124 aa). Cys284 functions as the Nucleophile in the catalytic mechanism.

The protein in the N-terminal section; belongs to the MsrA Met sulfoxide reductase family. This sequence in the C-terminal section; belongs to the MsrB Met sulfoxide reductase family.

The protein resides in the cell membrane. It carries out the reaction L-methionyl-[protein] + [thioredoxin]-disulfide + H2O = L-methionyl-(S)-S-oxide-[protein] + [thioredoxin]-dithiol. The catalysed reaction is [thioredoxin]-disulfide + L-methionine + H2O = L-methionine (S)-S-oxide + [thioredoxin]-dithiol. It catalyses the reaction L-methionyl-[protein] + [thioredoxin]-disulfide + H2O = L-methionyl-(R)-S-oxide-[protein] + [thioredoxin]-dithiol. Functionally, has an important function as a repair enzyme for proteins that have been inactivated by oxidation. Catalyzes the reversible oxidation-reduction of methionine sulfoxide in proteins to methionine. This chain is Peptide methionine sulfoxide reductase MsrA/MsrB 1 (msrAB1), found in Streptococcus pneumoniae serotype 4 (strain ATCC BAA-334 / TIGR4).